We begin with the raw amino-acid sequence, 198 residues long: Recombination protein RecR (198 aa).

The segment at 57-72 (CSVCGNLTDEDPCAIC) adopts a C4-type zinc-finger fold. The 96-residue stretch at 80 to 175 (STILIVEDSR…KVTRLARGLA (96 aa)) folds into the Toprim domain.

This sequence belongs to the RecR family.

Functionally, may play a role in DNA repair. It seems to be involved in an RecBC-independent recombinational process of DNA repair. It may act with RecF and RecO. The protein is Recombination protein RecR of Streptococcus sanguinis (strain SK36).